Reading from the N-terminus, the 90-residue chain is Phosphoribosyl-ATP pyrophosphatase (90 aa).

Belongs to the PRA-PH family.

It localises to the cytoplasm. The catalysed reaction is 1-(5-phospho-beta-D-ribosyl)-ATP + H2O = 1-(5-phospho-beta-D-ribosyl)-5'-AMP + diphosphate + H(+). It functions in the pathway amino-acid biosynthesis; L-histidine biosynthesis; L-histidine from 5-phospho-alpha-D-ribose 1-diphosphate: step 2/9. This Streptomyces avermitilis (strain ATCC 31267 / DSM 46492 / JCM 5070 / NBRC 14893 / NCIMB 12804 / NRRL 8165 / MA-4680) protein is Phosphoribosyl-ATP pyrophosphatase.